A 273-amino-acid polypeptide reads, in one-letter code: Probable glycerophosphodiester phosphodiesterase GpdQ (273 aa).

Asp-8, His-10, Asp-50, Asn-80, His-154, His-194, and His-196 together coordinate Fe cation.

Belongs to the cyclic nucleotide phosphodiesterase class-III family. The cofactor is Fe(2+).

The catalysed reaction is a sn-glycero-3-phosphodiester + H2O = an alcohol + sn-glycerol 3-phosphate + H(+). It carries out the reaction sn-glycero-3-phosphoethanolamine + H2O = ethanolamine + sn-glycerol 3-phosphate + H(+). Functionally, catalyzes the hydrolysis of the 3'-5' phosphodiester bond of glycerophosphodiesters such as glycerophosphorylethanolamine (GPE), a typical phospholipid metabolite. The protein is Probable glycerophosphodiester phosphodiesterase GpdQ of Arcobacter nitrofigilis (strain ATCC 33309 / DSM 7299 / CCUG 15893 / LMG 7604 / NCTC 12251 / CI) (Campylobacter nitrofigilis).